The following is a 1094-amino-acid chain: DNA polymerase delta catalytic subunit (1094 aa).

Zn(2+) is bound by residues Cys1003, Cys1006, Cys1016, and Cys1019. The segment at 1003 to 1019 (CIGCNSSIKKPPLCNHC) adopts a CysA-type zinc-finger fold. Residues Cys1049, Cys1052, Cys1062, and Cys1067 each contribute to the [4Fe-4S] cluster site. A CysB motif motif is present at residues 1049–1067 (CQRCQGNLHVDVICMNRDC).

The protein belongs to the DNA polymerase type-B family. Heterodimer composed of a catalytic subunit POLD and a small regulatory subunit. It depends on [4Fe-4S] cluster as a cofactor. Mg(2+) serves as cofactor.

It is found in the nucleus. The enzyme catalyses DNA(n) + a 2'-deoxyribonucleoside 5'-triphosphate = DNA(n+1) + diphosphate. Its activity is regulated as follows. The small regulatory subunit delta and PCNA1 increase POLD catalytic activity. Its function is as follows. This polymerase possesses two enzymatic activities: DNA synthesis (polymerase) and an exonucleolytic activity that degrades single-stranded DNA in the 3'- to 5'-direction. This chain is DNA polymerase delta catalytic subunit (POLD), found in Plasmodium falciparum (isolate K1 / Thailand).